Consider the following 500-residue polypeptide: Protein nucleotidyltransferase YdiU (500 aa).

ATP-binding residues include G96, G98, R99, K119, D131, G132, R182, and R189. D258 serves as the catalytic Proton acceptor. Mg(2+)-binding residues include N259 and D268. D268 provides a ligand contact to ATP.

Belongs to the SELO family. The cofactor is Mg(2+). Mn(2+) is required as a cofactor.

It carries out the reaction L-seryl-[protein] + ATP = 3-O-(5'-adenylyl)-L-seryl-[protein] + diphosphate. The catalysed reaction is L-threonyl-[protein] + ATP = 3-O-(5'-adenylyl)-L-threonyl-[protein] + diphosphate. The enzyme catalyses L-tyrosyl-[protein] + ATP = O-(5'-adenylyl)-L-tyrosyl-[protein] + diphosphate. It catalyses the reaction L-histidyl-[protein] + UTP = N(tele)-(5'-uridylyl)-L-histidyl-[protein] + diphosphate. It carries out the reaction L-seryl-[protein] + UTP = O-(5'-uridylyl)-L-seryl-[protein] + diphosphate. The catalysed reaction is L-tyrosyl-[protein] + UTP = O-(5'-uridylyl)-L-tyrosyl-[protein] + diphosphate. In terms of biological role, nucleotidyltransferase involved in the post-translational modification of proteins. It can catalyze the addition of adenosine monophosphate (AMP) or uridine monophosphate (UMP) to a protein, resulting in modifications known as AMPylation and UMPylation. The protein is Protein nucleotidyltransferase YdiU of Rhizobium leguminosarum bv. trifolii (strain WSM2304).